We begin with the raw amino-acid sequence, 279 residues long: Energy-coupling factor transporter ATP-binding protein EcfA1 (279 aa).

The 236-residue stretch at isoleucine 5 to aspartate 240 folds into the ABC transporter domain. Glycine 40–serine 47 contributes to the ATP binding site.

The protein belongs to the ABC transporter superfamily. Energy-coupling factor EcfA family. As to quaternary structure, forms a stable energy-coupling factor (ECF) transporter complex composed of 2 membrane-embedded substrate-binding proteins (S component), 2 ATP-binding proteins (A component) and 2 transmembrane proteins (T component).

It localises to the cell membrane. In terms of biological role, ATP-binding (A) component of a common energy-coupling factor (ECF) ABC-transporter complex. Unlike classic ABC transporters this ECF transporter provides the energy necessary to transport a number of different substrates. The polypeptide is Energy-coupling factor transporter ATP-binding protein EcfA1 (Enterococcus faecalis (strain ATCC 700802 / V583)).